Consider the following 402-residue polypeptide: Glutamate N-acetyltransferase (402 aa).

Positions 151, 178, 189, 267, 397, and 402 each coordinate substrate. Thr189 (nucleophile) is an active-site residue.

The protein belongs to the ArgJ family. Heterotetramer of two alpha and two beta chains.

The protein resides in the cytoplasm. It carries out the reaction N(2)-acetyl-L-ornithine + L-glutamate = N-acetyl-L-glutamate + L-ornithine. Its pathway is amino-acid biosynthesis; L-arginine biosynthesis; L-ornithine and N-acetyl-L-glutamate from L-glutamate and N(2)-acetyl-L-ornithine (cyclic): step 1/1. Functionally, catalyzes the transfer of the acetyl group from N(2)-acetylornithine to glutamate, forming N-acetylglutamate and L-ornithine. This chain is Glutamate N-acetyltransferase, found in Methanothermobacter thermautotrophicus (strain ATCC 29096 / DSM 1053 / JCM 10044 / NBRC 100330 / Delta H) (Methanobacterium thermoautotrophicum).